The sequence spans 341 residues: Mitochondrial dimethyladenosine transferase 1 (341 aa).

The N-terminal 27 residues, 1 to 27 (MASSRTLGTFRLPPLPTIREIIKLFRL), are a transit peptide targeting the mitochondrion. S-adenosyl-L-methionine contacts are provided by leucine 38, glycine 63, glutamate 85, lysine 86, aspartate 111, valine 112, and asparagine 141.

The protein belongs to the class I-like SAM-binding methyltransferase superfamily. rRNA adenine N(6)-methyltransferase family. KsgA subfamily. As to quaternary structure, interacts with mitochondrial RNA polymerase POLRMT. Interacts with TFAM. Bound to the maturing mtSSU until the late stages of assembly.

The protein localises to the mitochondrion. The enzyme catalyses adenosine(N)/adenosine(N+1) in rRNA + 4 S-adenosyl-L-methionine = N(6)-dimethyladenosine(N)/N(6)-dimethyladenosine(N+1) in rRNA + 4 S-adenosyl-L-homocysteine + 4 H(+). Mitochondrial methyltransferase which uses S-adenosyl methionine to dimethylate two highly conserved adjacent adenosine residues (A1583 and A1584) within the loop of helix 45 at the 3-prime end of 12S rRNA, thereby regulating the assembly or stability of the small subunit of the mitochondrial ribosome. Also required for basal transcription of mitochondrial DNA, probably via its interaction with POLRMT and TFAM. Stimulates transcription independently of the methyltransferase activity. The sequence is that of Mitochondrial dimethyladenosine transferase 1 (TFB1M) from Bos taurus (Bovine).